Here is a 470-residue protein sequence, read N- to C-terminus: Cell division protein FtsA (470 aa).

The disordered stretch occupies residues 416–470 (NKKDTHENEVESTDEEIYQSEDNHQEHKQNHEHVQDKDKDKEESKFKKLMKSLFE). The segment covering 425–434 (VESTDEEIYQ) has biased composition (acidic residues). Basic and acidic residues predominate over residues 436–461 (EDNHQEHKQNHEHVQDKDKDKEESKF).

This sequence belongs to the FtsA/MreB family. In terms of assembly, self-interacts. Interacts with FtsZ.

It is found in the cell membrane. Its function is as follows. Cell division protein that is involved in the assembly of the Z ring. May serve as a membrane anchor for the Z ring. The protein is Cell division protein FtsA of Staphylococcus aureus (strain MSSA476).